The chain runs to 519 residues: Tachykinin-like peptides receptor 99D (519 aa).

Residues 1 to 100 (MENRSDFEAD…SFAFVVPWWR (100 aa)) lie on the Extracellular side of the membrane. N-linked (GlcNAc...) asparagine glycans are attached at residues Asn-3, Asn-19, Asn-22, and Asn-61. Residues 101 to 123 (QVLWSILFGGMVIVATGGNLIVV) form a helical membrane-spanning segment. Residues 124–134 (WIVMTTKRMRT) lie on the Cytoplasmic side of the membrane. Residues 135–155 (VTNYFIVNLSIADAMVSSLNV) traverse the membrane as a helical segment. Residues 156 to 175 (TFNYYYMLDSDWPFGEFYCK) are Extracellular-facing. A disulfide bridge connects residues Cys-174 and Cys-254. A helical membrane pass occupies residues 176–197 (LSQFIAMLSICASVFTLMAISI). At 198–217 (DRYVAIIRPLQPRMSKRCNL) the chain is on the cytoplasmic side. Residues 218–238 (AIAAVIWLASTLISCPMMIIY) traverse the membrane as a helical segment. The Extracellular segment spans residues 239-270 (RTEEVPVRGLSNRTVCYPEWPDGPTNHSTMES). A helical membrane pass occupies residues 271 to 292 (LYNILIIILTYFLPIVSMTVTY). At 293-324 (SRVGIELWGSKTIGECTPRQVENVRSKRRVVK) the chain is on the cytoplasmic side. The chain crosses the membrane as a helical span at residues 325–346 (MMIVVVLIFAICWLPFHSYFII). The Extracellular portion of the chain corresponds to 347 to 361 (TSCYPAITEAPFIQE). The helical transmembrane segment at 362 to 384 (LYLAIYWLAMSNSMYNPIIYCWM) threads the bilayer. The Cytoplasmic segment spans residues 385-519 (NSRFRYGFKM…STANTTQLLS (135 aa)). Cys-399 is lipidated: S-palmitoyl cysteine. Residues 444–519 (PSSPKSHRIS…STANTTQLLS (76 aa)) form a disordered region. Polar residues-rich tracts occupy residues 454–465 (HSGTGRSATLRN) and 487–499 (SYQQ…WSGP). A compositionally biased stretch (low complexity) spans 500–519 (NSATAVTNSSSTANTTQLLS).

It belongs to the G-protein coupled receptor 1 family. As to expression, during late embryogenesis (stages 11-15), expressed in the brain and in a specific subset of neurons in each neuromere of the developing ventral ganglion. Expressed in the cortex of the adult brain, which contains the neuronal cell bodies.

The protein resides in the cell membrane. Its function is as follows. Receptor for tachykinin-like peptides. This is Tachykinin-like peptides receptor 99D (TkR99D) from Drosophila melanogaster (Fruit fly).